Reading from the N-terminus, the 472-residue chain is Probable sterol O-acyltransferase 2 (472 aa).

Ser12 bears the Phosphoserine mark. The next 3 helical transmembrane spans lie at 61–81 (FTGF…MSFL), 111–131 (LAMS…ALGY), and 135–155 (YGLG…HCVL). N-linked (GlcNAc...) asparagine glycosylation occurs at Asn161. A helical transmembrane segment spans residues 170-190 (FILHSMVILMKLHSYNVVNGW). N-linked (GlcNAc...) asparagine glycosylation is present at Asn233. The next 2 membrane-spanning stretches (helical) occupy residues 262–282 (IHYL…LVII) and 317–337 (TVAF…WVIF). Asn342 carries an N-linked (GlcNAc...) asparagine glycan. An FYXDWWN motif motif is present at residues 355 to 361 (FYDDWWN). His409 is a catalytic residue. The chain crosses the membrane as a helical span at residues 452 to 472 (IAFWFSIIIGIALIAALYILF).

This sequence belongs to the membrane-bound acyltransferase family. Sterol o-acyltransferase subfamily.

The protein resides in the endoplasmic reticulum membrane. Sterol O-acyltransferase that catalyzes the formation of stery esters. The sequence is that of Probable sterol O-acyltransferase 2 (are2) from Schizosaccharomyces pombe (strain 972 / ATCC 24843) (Fission yeast).